We begin with the raw amino-acid sequence, 70 residues long: Large ribosomal subunit protein uL29 (70 aa).

The protein belongs to the universal ribosomal protein uL29 family.

The chain is Large ribosomal subunit protein uL29 from Prochlorococcus marinus (strain MIT 9303).